The primary structure comprises 239 residues: Transcriptional regulatory protein BtsR (239 aa).

Positions 3-116 (KVLIVDDEPL…RLEKTLARLR (114 aa)) constitute a Response regulatory domain. The residue at position 54 (aspartate 54) is a 4-aspartylphosphate. One can recognise an HTH LytTR-type domain in the interval 137-239 (IPCTGHSRIY…LKSLKEAIGL (103 aa)).

Post-translationally, phosphorylated by BtsS.

Functionally, member of the two-component regulatory system BtsS/BtsR. BtsR regulates expression of btsT by binding to its promoter region. The chain is Transcriptional regulatory protein BtsR from Escherichia coli O6:H1 (strain CFT073 / ATCC 700928 / UPEC).